The sequence spans 141 residues: Sec-independent protein translocase protein TatB (141 aa).

The chain crosses the membrane as a helical span at residues 2-22 (FANVGWGEMLVLVIAGLVILG). The disordered stretch occupies residues 92–141 (IFTGRFDSTSSDQPGSGKPPKPQSGPGPAAASGPAATTTPASTPFDPDAT). Residues 117 to 141 (PGPAAASGPAATTTPASTPFDPDAT) show a composition bias toward low complexity.

This sequence belongs to the TatB family. As to quaternary structure, the Tat system comprises two distinct complexes: a TatABC complex, containing multiple copies of TatA, TatB and TatC subunits, and a separate TatA complex, containing only TatA subunits. Substrates initially bind to the TatABC complex, which probably triggers association of the separate TatA complex to form the active translocon.

It is found in the cell membrane. In terms of biological role, part of the twin-arginine translocation (Tat) system that transports large folded proteins containing a characteristic twin-arginine motif in their signal peptide across membranes. Together with TatC, TatB is part of a receptor directly interacting with Tat signal peptides. TatB may form an oligomeric binding site that transiently accommodates folded Tat precursor proteins before their translocation. The chain is Sec-independent protein translocase protein TatB from Mycolicibacterium gilvum (strain PYR-GCK) (Mycobacterium gilvum (strain PYR-GCK)).